Reading from the N-terminus, the 110-residue chain is UPF0251 protein PH0803 (110 aa).

The protein belongs to the UPF0251 family.

The protein is UPF0251 protein PH0803 of Pyrococcus horikoshii (strain ATCC 700860 / DSM 12428 / JCM 9974 / NBRC 100139 / OT-3).